The sequence spans 157 residues: SsrA-binding protein (157 aa).

Belongs to the SmpB family.

The protein resides in the cytoplasm. Required for rescue of stalled ribosomes mediated by trans-translation. Binds to transfer-messenger RNA (tmRNA), required for stable association of tmRNA with ribosomes. tmRNA and SmpB together mimic tRNA shape, replacing the anticodon stem-loop with SmpB. tmRNA is encoded by the ssrA gene; the 2 termini fold to resemble tRNA(Ala) and it encodes a 'tag peptide', a short internal open reading frame. During trans-translation Ala-aminoacylated tmRNA acts like a tRNA, entering the A-site of stalled ribosomes, displacing the stalled mRNA. The ribosome then switches to translate the ORF on the tmRNA; the nascent peptide is terminated with the 'tag peptide' encoded by the tmRNA and targeted for degradation. The ribosome is freed to recommence translation, which seems to be the essential function of trans-translation. The sequence is that of SsrA-binding protein from Syntrophomonas wolfei subsp. wolfei (strain DSM 2245B / Goettingen).